The primary structure comprises 150 residues: MTNSFQNSRRDLRERAFQALFNIEMGAELLAASQFAYGYDKVTREDAQVLELPIFLLSLVTGVNNHKEELDNLISTHLKKGWSLERLTLTDKTLLRLGLFEIKYFDETPDRVALNEIIEVAKKYSDETSAKFINGLLSQYVSEAPSANKS.

This sequence belongs to the NusB family.

Its function is as follows. Involved in transcription antitermination. Required for transcription of ribosomal RNA (rRNA) genes. Binds specifically to the boxA antiterminator sequence of the ribosomal RNA (rrn) operons. The chain is Transcription antitermination protein NusB from Streptococcus pyogenes serotype M2 (strain MGAS10270).